We begin with the raw amino-acid sequence, 23 residues long: Hemocyanin subunit 1 (23 aa).

The tract at residues 1–23 is disordered; the sequence is DSPGGASDTQKQHXVNSXXXKXY.

The protein belongs to the tyrosinase family. Hemocyanin subfamily. As to expression, hemolymph.

It is found in the secreted. Its subcellular location is the extracellular space. In terms of biological role, hemocyanins are copper-containing oxygen carriers occurring freely dissolved in the hemolymph of many mollusks and arthropods. The polypeptide is Hemocyanin subunit 1 (Cancer pagurus (Rock crab)).